A 147-amino-acid chain; its full sequence is Small ribosomal subunit protein uS5 (147 aa).

An S5 DRBM domain is found at 9–72; the sequence is FEEVVVNISR…DNAFKNITTV (64 aa).

It belongs to the universal ribosomal protein uS5 family. Part of the 30S ribosomal subunit. Contacts proteins S4 and S8.

In terms of biological role, with S4 and S12 plays an important role in translational accuracy. Located at the back of the 30S subunit body where it stabilizes the conformation of the head with respect to the body. This is Small ribosomal subunit protein uS5 from Nitratiruptor sp. (strain SB155-2).